The sequence spans 356 residues: Protein-glutamate methylesterase/protein-glutamine glutaminase 4 (356 aa).

A Response regulatory domain is found at 15-132 (RVLVVDDSAV…SVGEMTADLV (118 aa)). 4-aspartylphosphate is present on D66. Residues 162-348 (ARTTLQVVAI…PLDRIAPEIL (187 aa)) enclose the CheB-type methylesterase domain. Active-site residues include S174, H200, and D296.

The protein belongs to the CheB family. In terms of processing, phosphorylated by CheA. Phosphorylation of the N-terminal regulatory domain activates the methylesterase activity.

It is found in the cytoplasm. It catalyses the reaction [protein]-L-glutamate 5-O-methyl ester + H2O = L-glutamyl-[protein] + methanol + H(+). The enzyme catalyses L-glutaminyl-[protein] + H2O = L-glutamyl-[protein] + NH4(+). In terms of biological role, involved in chemotaxis. Part of a chemotaxis signal transduction system that modulates chemotaxis in response to various stimuli. Catalyzes the demethylation of specific methylglutamate residues introduced into the chemoreceptors (methyl-accepting chemotaxis proteins or MCP) by CheR. Also mediates the irreversible deamidation of specific glutamine residues to glutamic acid. The protein is Protein-glutamate methylesterase/protein-glutamine glutaminase 4 of Anaeromyxobacter dehalogenans (strain 2CP-C).